The chain runs to 758 residues: Matrix metalloproteinase-2 (758 aa).

Residues 1 to 17 (MFSKYVLATLLALFAQS) form the signal peptide. His-257 contacts Zn(2+). Glu-258 is a catalytic residue. Residues His-261 and His-267 each contribute to the Zn(2+) site. Residues 335 to 514 (AYWPWNNPSN…HNKPRKPKPD (180 aa)) are disordered. Residues 338 to 348 (PWNNPSNNPNN) are compositionally biased toward low complexity. A compositionally biased stretch (basic and acidic residues) spans 349-476 (DRNRARERQE…EWERRNRNGA (128 aa)). Low complexity predominate over residues 479–494 (PVTPTANTTPRPTNKP). Basic residues predominate over residues 499–510 (HRQHHHHNKPRK). 4 Hemopexin repeats span residues 513–561 (PDSC…WSAL), 565–610 (LTKV…GLPP), 612–659 (LTHI…WSGV), and 660–707 (GYNI…WMQC). An intrachain disulfide couples Cys-516 to Cys-707. The helical transmembrane segment at 739 to 756 (LRINHFILSILLLAIANW) threads the bilayer. Residues 757-758 (RS) are Cytoplasmic-facing.

This sequence belongs to the peptidase M10A family. Ca(2+) is required as a cofactor. The cofactor is Zn(2+). In terms of tissue distribution, widely expressed during embryogenesis including in the mesoderm, developing gut, central and peripheral nervous systems and imaginal disks. In the embryonic nervous system, expressed in neurons and glia. In third instar larvae, strongly expressed in the morphogenetic furrow of eye imaginal disks and in the optic lobe region of the brain. Expressed in posterior follicle cells in all mature stage 14 follicles but not in earlier follicles and is also expressed in some anterior follicle cells that help form dorsal eggshell structures.

Its subcellular location is the cell membrane. In terms of biological role, has metalloproteinase activity. Proteolytically cleaves the PGRP-LC receptor; involved in gut-fat body innate immunological communication (GFIC)-mediated activation of the imd/Relish signal transduction pathway. Required for larval tissue histolysis during metamorphosis and is involved in pupal head eversion and fusion of the wing imaginal tissue. Required for growth of the dorsal air sac primordium and development of the dorsal air sacs. Promotes embryonic motor axon fasciculation. Cleaves and activates frac to promote motor axon bundling during outgrowth. Promotes the reshaping of adult sensory neuron dendrites from a radial to lattice-like shape which occurs after eclosion by degrading the basement membrane on which the dendrites grow. Involved in inhibition of follicle stem cell proliferation by cleaving Dlp, inhibiting its interaction with wg and preventing Dlp-mediated spreading of wg to follicle stem cells to enhance their proliferation. Plays a role in wound healing. Involved in fat body dissociation which occurs during metamorphosis by degrading basement membrane components, leading to destruction of cell-basement membrane junctions. Required for posterior follicle cell degradation and ovulation. The sequence is that of Matrix metalloproteinase-2 from Drosophila melanogaster (Fruit fly).